Consider the following 161-residue polypeptide: Peroxynitrite isomerase (161 aa).

The GXWXGXG signature appears at 17–23 (GSWVGRG). Histidine 152 contributes to the heme b binding site.

This sequence belongs to the nitrobindin family. Homodimer. Requires heme b as cofactor.

It catalyses the reaction peroxynitrite = nitrate. It participates in nitrogen metabolism. Functionally, heme-binding protein able to scavenge peroxynitrite and to protect free L-tyrosine against peroxynitrite-mediated nitration, by acting as a peroxynitrite isomerase that converts peroxynitrite to nitrate. Therefore, this protein likely plays a role in peroxynitrite sensing and in the detoxification of reactive nitrogen and oxygen species (RNS and ROS, respectively). Is able to bind nitric oxide (NO) in vitro, but may act as a sensor of peroxynitrite levels in vivo. The sequence is that of Peroxynitrite isomerase from Mycobacterium leprae (strain TN).